A 498-amino-acid polypeptide reads, in one-letter code: Lysine--tRNA ligase (498 aa).

E401 and E408 together coordinate Mg(2+).

This sequence belongs to the class-II aminoacyl-tRNA synthetase family. Homodimer. Mg(2+) is required as a cofactor.

It is found in the cytoplasm. The catalysed reaction is tRNA(Lys) + L-lysine + ATP = L-lysyl-tRNA(Lys) + AMP + diphosphate. This Dehalococcoides mccartyi (strain ATCC BAA-2266 / KCTC 15142 / 195) (Dehalococcoides ethenogenes (strain 195)) protein is Lysine--tRNA ligase.